The sequence spans 555 residues: Cyclin-T1.2 (555 aa).

Disordered stretches follow at residues 315-429 (SYKG…NSSK) and 505-555 (PADS…GELV). Positions 321 to 335 (KPLSNSSDSPSTRPS) are enriched in low complexity. A compositionally biased stretch (basic and acidic residues) spans 341 to 359 (KNQKVVEQELMEQRMKEAA). The span at 382-398 (TSSSASNNSNHQNRSSS) shows a compositional bias: low complexity. Residues 521-543 (PDEPSPPVSQILLPPPPPPPILP) show a composition bias toward pro residues.

It belongs to the cyclin family. Cyclin C subfamily.

Regulatory subunit of the cyclin-dependent kinase pair (CDK9/cyclin T) complex, also called positive transcription elongation factor B (P-TEFb), which is proposed to facilitate the transition from abortive to production elongation by phosphorylating the CTD (carboxy-terminal domain) of the large subunit of RNA polymerase II (RNAP II). In Caenorhabditis elegans, this protein is Cyclin-T1.2 (cit-1.2).